The sequence spans 705 residues: Elongation factor G 2 (705 aa).

In terms of domain architecture, tr-type G spans 8–290 (ELYRNIGISA…AVLDYLPSPL (283 aa)). Residues 17-24 (AHIDAGKT), 88-92 (DTPGH), and 142-145 (NKMD) contribute to the GTP site.

It belongs to the TRAFAC class translation factor GTPase superfamily. Classic translation factor GTPase family. EF-G/EF-2 subfamily.

It localises to the cytoplasm. Catalyzes the GTP-dependent ribosomal translocation step during translation elongation. During this step, the ribosome changes from the pre-translocational (PRE) to the post-translocational (POST) state as the newly formed A-site-bound peptidyl-tRNA and P-site-bound deacylated tRNA move to the P and E sites, respectively. Catalyzes the coordinated movement of the two tRNA molecules, the mRNA and conformational changes in the ribosome. This is Elongation factor G 2 from Bordetella avium (strain 197N).